A 521-amino-acid chain; its full sequence is Pentatricopeptide repeat-containing protein At4g26680, mitochondrial (521 aa).

The N-terminal 38 residues, 1–38 (MIRISIGVNRRLRYQFSSFAGYSGSENPRLFKTLGAAN), are a transit peptide targeting the mitochondrion. 10 PPR repeats span residues 167-201 (TPRV…GFLP), 202-236 (TVES…KISP), 237-271 (NPYT…GFRA), 272-306 (TDVS…GLQP), 307-341 (NVVT…NVAP), 342-376 (NTVT…GIQR), 377-411 (DILT…NLVP), 412-446 (NSST…GCHP), 447-481 (NEQT…SIPL), and 482-516 (DSRT…KFLQ).

It belongs to the PPR family. P subfamily.

The protein resides in the mitochondrion. The protein is Pentatricopeptide repeat-containing protein At4g26680, mitochondrial of Arabidopsis thaliana (Mouse-ear cress).